The primary structure comprises 128 residues: Small ribosomal subunit protein uS11 (128 aa).

It belongs to the universal ribosomal protein uS11 family. In terms of assembly, part of the 30S ribosomal subunit. Interacts with proteins S7 and S18. Binds to IF-3.

Its function is as follows. Located on the platform of the 30S subunit, it bridges several disparate RNA helices of the 16S rRNA. Forms part of the Shine-Dalgarno cleft in the 70S ribosome. The polypeptide is Small ribosomal subunit protein uS11 (Ligilactobacillus salivarius (strain UCC118) (Lactobacillus salivarius)).